The primary structure comprises 767 residues: 5-methyltetrahydropteroyltriglutamate--homocysteine methyltransferase (767 aa).

5-methyltetrahydropteroyltri-L-glutamate is bound by residues 17 to 20 and K117; that span reads RELK. Residues 441–443 and E494 each bind L-homocysteine; that span reads IGS. Residues 441–443 and E494 contribute to the L-methionine site; that span reads IGS. Residues 525 to 526 and W571 each bind 5-methyltetrahydropteroyltri-L-glutamate; that span reads RC. Position 609 (D609) interacts with L-homocysteine. An L-methionine-binding site is contributed by D609. E615 lines the 5-methyltetrahydropteroyltri-L-glutamate pocket. Residues H652, C654, and E676 each contribute to the Zn(2+) site. Catalysis depends on H705, which acts as the Proton donor. A Zn(2+)-binding site is contributed by C737.

This sequence belongs to the vitamin-B12 independent methionine synthase family. It depends on Zn(2+) as a cofactor.

The enzyme catalyses 5-methyltetrahydropteroyltri-L-glutamate + L-homocysteine = tetrahydropteroyltri-L-glutamate + L-methionine. It functions in the pathway amino-acid biosynthesis; L-methionine biosynthesis via de novo pathway; L-methionine from L-homocysteine (MetE route): step 1/1. In terms of biological role, catalyzes the transfer of a methyl group from 5-methyltetrahydrofolate to homocysteine resulting in methionine formation. The sequence is that of 5-methyltetrahydropteroyltriglutamate--homocysteine methyltransferase from Bifidobacterium longum subsp. infantis (strain ATCC 15697 / DSM 20088 / JCM 1222 / NCTC 11817 / S12).